The following is a 323-amino-acid chain: uncharacterized protein (323 aa).

One can recognise an S4 RNA-binding domain in the interval 16 to 95 (QRIDQFCLKI…DKLKIIFEDE (80 aa)). Aspartate 148 is a catalytic residue.

It belongs to the pseudouridine synthase RluA family.

It catalyses the reaction a uridine in RNA = a pseudouridine in RNA. This is an uncharacterized protein from Mycoplasma genitalium (strain ATCC 33530 / DSM 19775 / NCTC 10195 / G37) (Mycoplasmoides genitalium).